The primary structure comprises 206 residues: Outer-membrane lipoprotein LolB (206 aa).

Residues 1–18 (MKTFKFLTALFATAILTA) form the signal peptide. Cys-19 carries the N-palmitoyl cysteine lipid modification. A lipid anchor (S-diacylglycerol cysteine) is attached at Cys-19.

The protein belongs to the LolB family. As to quaternary structure, monomer.

Its subcellular location is the cell outer membrane. Plays a critical role in the incorporation of lipoproteins in the outer membrane after they are released by the LolA protein. This Haemophilus influenzae (strain PittEE) protein is Outer-membrane lipoprotein LolB.